The primary structure comprises 32 residues: U3-cyrtautoxin-As1a (32 aa).

Intrachain disulfides connect cysteine 4/cysteine 19, cysteine 11/cysteine 24, and cysteine 18/cysteine 29.

The protein belongs to the neurotoxin 14 (magi-1) family. It to aptotoxin III. In terms of tissue distribution, expressed by the venom gland.

It localises to the secreted. Is both paralytic and lethal, when injected into lepidopteran larvae. Is a slower acting toxin, being lethal at 24 hours, but not paralytic at 1 hour post-injection. The protein is U3-cyrtautoxin-As1a of Apomastus schlingeri (Trap-door spider).